The primary structure comprises 163 residues: NADH-quinone oxidoreductase subunit 9 (163 aa).

4Fe-4S ferredoxin-type domains lie at 54-84 and 94-123; these read LRRY…IDAE and TRYD…EGPN. [4Fe-4S] cluster-binding residues include cysteine 64, cysteine 67, cysteine 70, cysteine 74, cysteine 103, cysteine 106, cysteine 109, and cysteine 113.

It belongs to the complex I 23 kDa subunit family. NDH-1 is composed of at least 14 different subunits, Nqo1 to Nqo14. The complex has a L-shaped structure, with the hydrophobic arm (subunits Nqo7, Nqo8, Nqo10 to Nqo14) embedded in the inner membrane and the hydrophilic peripheral arm (subunits Nqo1 to Nqo6, Nqo9) protruding into the bacterial cytoplasm. The hydrophilic domain contains all the redox centers. [4Fe-4S] cluster serves as cofactor.

The protein resides in the cell inner membrane. It catalyses the reaction a quinone + NADH + 5 H(+)(in) = a quinol + NAD(+) + 4 H(+)(out). NDH-1 shuttles electrons from NADH, via FMN and iron-sulfur (Fe-S) centers, to quinones in the respiratory chain. The immediate electron acceptor for the enzyme in this species is believed to be ubiquinone. Couples the redox reaction to proton translocation (for every two electrons transferred, four hydrogen ions are translocated across the cytoplasmic membrane), and thus conserves the redox energy in a proton gradient. This Paracoccus denitrificans protein is NADH-quinone oxidoreductase subunit 9.